The primary structure comprises 93 residues: MKPLVLLSALVLLSFQVQADPIQNTDEETKTEEQSGEEDQAVSVSFGDREGASLQEESLRDLVCYCRTRGCKRRERMNGTCRKGHLMYTLCCR.

The N-terminal stretch at 1–19 is a signal peptide; it reads MKPLVLLSALVLLSFQVQA. Positions 20–58 are excised as a propeptide; it reads DPIQNTDEETKTEEQSGEEDQAVSVSFGDREGASLQEES. The disordered stretch occupies residues 23–49; sequence QNTDEETKTEEQSGEEDQAVSVSFGDR. Cystine bridges form between C64-C92, C66-C81, and C71-C91.

The protein belongs to the alpha-defensin family. As to expression, paneth cells of the small bowel.

Its subcellular location is the secreted. Its function is as follows. Has broad-spectrum antimicrobial properties. Has antibacterial activity against the Gram-positive bacterium L.monocytogenes EGD and the Gram-negative bacteria E.coli ML-35p and avirulent S.typhimurium 7953, but not against the mouse-virulent S.typhimurium 14028S. Probably contributes to the antimicrobial barrier function of the small bowel mucosa. In Mus musculus (Mouse), this protein is Alpha-defensin 2 (Defa2).